We begin with the raw amino-acid sequence, 494 residues long: Lysine--tRNA ligase (494 aa).

2 residues coordinate Mg(2+): glutamate 407 and glutamate 414.

This sequence belongs to the class-II aminoacyl-tRNA synthetase family. Homodimer. It depends on Mg(2+) as a cofactor.

It localises to the cytoplasm. The catalysed reaction is tRNA(Lys) + L-lysine + ATP = L-lysyl-tRNA(Lys) + AMP + diphosphate. This Lactococcus lactis subsp. cremoris (strain MG1363) protein is Lysine--tRNA ligase.